A 185-amino-acid chain; its full sequence is Bcl-2-modifying factor (185 aa).

Residues 1–28 (MEPPQCVEELEDDVFQSEDGEPGTQPGG) are disordered. Residues 8-21 (EELEDDVFQSEDGE) show a composition bias toward acidic residues. Residues 67–75 (DKATQTLSP) form an interaction with DLC2 region. Residues 134-148 (IARKLQCIADQFHRL) carry the BH3 motif.

The protein belongs to the Bcl-2 family. As to quaternary structure, interacts with MCL1, BCL2, BCL2L1/BCL-Xl, BCL2A1 and BCL2L2/BCL-w. Interacts with the myosin V actin motor complex through its binding to DLC2. Widely expressed with an abundant expression in pancreas, liver kidney and hematopoietic tissues.

May play a role in apoptosis. The chain is Bcl-2-modifying factor (Bmf) from Mus musculus (Mouse).